The chain runs to 579 residues: Thiol:disulfide interchange protein DsbD (579 aa).

The first 16 residues, Met1 to Ala16, serve as a signal peptide directing secretion. Intrachain disulfides connect Cys124/Cys129 and Cys193/Cys315. 8 helical membrane passes run Ile178–Leu198, Leu230–Leu250, Tyr254–Phe274, Gly296–Thr316, Ala337–Phe357, Phe376–Trp396, Glu397–Ser417, and Gly420–Leu440. The Thioredoxin domain maps to Thr449 to His579. The cysteines at positions 495 and 498 are disulfide-linked.

It belongs to the thioredoxin family. DsbD subfamily.

Its subcellular location is the cell inner membrane. It catalyses the reaction [protein]-dithiol + NAD(+) = [protein]-disulfide + NADH + H(+). The catalysed reaction is [protein]-dithiol + NADP(+) = [protein]-disulfide + NADPH + H(+). Functionally, required to facilitate the formation of correct disulfide bonds in some periplasmic proteins and for the assembly of the periplasmic c-type cytochromes. Acts by transferring electrons from cytoplasmic thioredoxin to the periplasm. This transfer involves a cascade of disulfide bond formation and reduction steps. The sequence is that of Thiol:disulfide interchange protein DsbD from Haemophilus influenzae (strain PittEE).